The chain runs to 379 residues: Cytochrome b (379 aa).

4 helical membrane-spanning segments follow: residues 33–53 (FGSL…FLAM), 77–98 (WTIR…FIHV), 113–133 (WNVG…GYVL), and 178–198 (FFAL…IHLL). The heme b site is built by His83 and His97. The heme b site is built by His182 and His196. Residue His201 participates in a ubiquinone binding. A run of 4 helical transmembrane segments spans residues 226 to 246 (TKDF…ALFY), 288 to 308 (LGGV…PFLQ), 320 to 340 (LSQF…WIGG), and 347 to 367 (FINI…FIMP).

Belongs to the cytochrome b family. As to quaternary structure, the cytochrome bc1 complex contains 11 subunits: 3 respiratory subunits (MT-CYB, CYC1 and UQCRFS1), 2 core proteins (UQCRC1 and UQCRC2) and 6 low-molecular weight proteins (UQCRH/QCR6, UQCRB/QCR7, UQCRQ/QCR8, UQCR10/QCR9, UQCR11/QCR10 and a cleavage product of UQCRFS1). This cytochrome bc1 complex then forms a dimer. It depends on heme b as a cofactor.

The protein resides in the mitochondrion inner membrane. Its function is as follows. Component of the ubiquinol-cytochrome c reductase complex (complex III or cytochrome b-c1 complex) that is part of the mitochondrial respiratory chain. The b-c1 complex mediates electron transfer from ubiquinol to cytochrome c. Contributes to the generation of a proton gradient across the mitochondrial membrane that is then used for ATP synthesis. The protein is Cytochrome b (MT-CYB) of Lepilemur sahamalazensis (Sahamalaza sportive lemur).